Reading from the N-terminus, the 940-residue chain is Isoleucine--tRNA ligase (940 aa).

The 'HIGH' region motif lies at 58–68 (PYANGDIHIGH). Glutamate 564 lines the L-isoleucyl-5'-AMP pocket. A 'KMSKS' region motif is present at residues 605–609 (KMSKS). Lysine 608 contributes to the ATP binding site. Zn(2+) is bound by residues cysteine 903, cysteine 906, cysteine 923, and cysteine 926.

The protein belongs to the class-I aminoacyl-tRNA synthetase family. IleS type 1 subfamily. In terms of assembly, monomer. Requires Zn(2+) as cofactor.

It is found in the cytoplasm. The catalysed reaction is tRNA(Ile) + L-isoleucine + ATP = L-isoleucyl-tRNA(Ile) + AMP + diphosphate. Catalyzes the attachment of isoleucine to tRNA(Ile). As IleRS can inadvertently accommodate and process structurally similar amino acids such as valine, to avoid such errors it has two additional distinct tRNA(Ile)-dependent editing activities. One activity is designated as 'pretransfer' editing and involves the hydrolysis of activated Val-AMP. The other activity is designated 'posttransfer' editing and involves deacylation of mischarged Val-tRNA(Ile). The chain is Isoleucine--tRNA ligase from Shewanella pealeana (strain ATCC 700345 / ANG-SQ1).